We begin with the raw amino-acid sequence, 254 residues long: 4-hydroxy-tetrahydrodipicolinate reductase (254 aa).

7-12 (GASGRI) contributes to the NAD(+) binding site. R35 contributes to the NADP(+) binding site. NAD(+) is bound by residues 91-93 (GTT) and 115-118 (AHNM). H147 acts as the Proton donor/acceptor in catalysis. H148 is a binding site for (S)-2,3,4,5-tetrahydrodipicolinate. Catalysis depends on K151, which acts as the Proton donor. 157–158 (GT) contributes to the (S)-2,3,4,5-tetrahydrodipicolinate binding site.

This sequence belongs to the DapB family.

It localises to the cytoplasm. The enzyme catalyses (S)-2,3,4,5-tetrahydrodipicolinate + NAD(+) + H2O = (2S,4S)-4-hydroxy-2,3,4,5-tetrahydrodipicolinate + NADH + H(+). The catalysed reaction is (S)-2,3,4,5-tetrahydrodipicolinate + NADP(+) + H2O = (2S,4S)-4-hydroxy-2,3,4,5-tetrahydrodipicolinate + NADPH + H(+). It participates in amino-acid biosynthesis; L-lysine biosynthesis via DAP pathway; (S)-tetrahydrodipicolinate from L-aspartate: step 4/4. Its function is as follows. Catalyzes the conversion of 4-hydroxy-tetrahydrodipicolinate (HTPA) to tetrahydrodipicolinate. This chain is 4-hydroxy-tetrahydrodipicolinate reductase, found in Helicobacter pylori (strain ATCC 700392 / 26695) (Campylobacter pylori).